Consider the following 84-residue polypeptide: CDC42 small effector protein 2 (84 aa).

S-palmitoyl cysteine attachment occurs at residues cysteine 10 and cysteine 11. Positions 29 to 42 constitute a CRIB domain; sequence IGEPTNFVHTAHVG. 2 positions are modified to phosphoserine: serine 43 and serine 52.

Belongs to the CDC42SE/SPEC family. In terms of assembly, interacts with CDC42 (in GTP-bound form). Interacts weakly with RAC1 and not at all with RHOA.

Its subcellular location is the cytoplasm. It localises to the cytoskeleton. The protein localises to the cell membrane. It is found in the cell projection. The protein resides in the phagocytic cup. Its function is as follows. Probably involved in the organization of the actin cytoskeleton by acting downstream of CDC42, inducing actin filament assembly. Alters CDC42-induced cell shape changes. In activated T-cells, may play a role in CDC42-mediated F-actin accumulation at the immunological synapse. May play a role in early contractile events in phagocytosis in macrophages. In Bos taurus (Bovine), this protein is CDC42 small effector protein 2 (CDC42SE2).